A 126-amino-acid polypeptide reads, in one-letter code: Major sperm protein 1 (126 aa).

N-acetylalanine is present on alanine 2. Positions 8–125 (DIATMPAQKV…RRKNLPIEYN (118 aa)) constitute an MSP domain.

Sperm.

The protein localises to the cell projection. Its subcellular location is the pseudopodium. It is found in the cytoplasm. It localises to the cytoskeleton. Its function is as follows. Central component in molecular interactions underlying sperm crawling. Forms an extensive filament system that extends from sperm villipoda, along the leading edge of the pseudopod. The sequence is that of Major sperm protein 1 (MSP-1) from Globodera rostochiensis (Golden nematode worm).